A 224-amino-acid polypeptide reads, in one-letter code: Peroxiredoxin-6 (224 aa).

The Thioredoxin domain occupies 5 to 169 (LLLGDEAPNF…ILRVIISLQL (165 aa)). The segment at 31-40 (DSWGILFSHP) is required and sufficient for targeting to lysosomes and lamellar bodies. Thr-44 is modified (phosphothreonine). The active-site Cysteine sulfenic acid (-SOH) intermediate; for peroxidase activity is the Cys-47. At Lys-63 the chain carries N6-acetyllysine. Position 89 is a phosphotyrosine (Tyr-89). Asp-140 serves as the catalytic For phospholipase activity. At Thr-177 the chain carries Phosphothreonine; by MAPK. At Lys-209 the chain carries N6-acetyllysine; alternate. Residue Lys-209 is modified to N6-succinyllysine; alternate.

It belongs to the peroxiredoxin family. Prx6 subfamily. In terms of assembly, homodimer. Interacts with GSTP1; mediates PRDX6 glutathionylation and regeneration. Interacts with APEX1. Interacts with STH. May interact with FAM168B. May interact with HTR2A. It depends on Does not need Ca(2+) as cofactor. as a cofactor. In terms of processing, irreversibly inactivated by overoxidation of Cys-47 to sulfinic acid (Cys-SO(2)H) and sulfonic acid (Cys-SO(3)H) forms upon oxidative stress. Post-translationally, phosphorylation at Thr-177 by MAP kinases increases the phospholipase activity of the enzyme. The phosphorylated form exhibits a greater lysophosphatidylcholine acyltransferase activity compared to the non-phosphorylated form.

The protein localises to the cytoplasm. The protein resides in the lysosome. It catalyses the reaction a hydroperoxide + 2 glutathione = an alcohol + glutathione disulfide + H2O. It carries out the reaction a 1,2-diacyl-sn-glycero-3-phosphocholine + H2O = a 1-acyl-sn-glycero-3-phosphocholine + a fatty acid + H(+). The catalysed reaction is a 1-acyl-sn-glycero-3-phosphocholine + an acyl-CoA = a 1,2-diacyl-sn-glycero-3-phosphocholine + CoA. The enzyme catalyses 1-hexadecanoyl-sn-glycero-3-phosphocholine + hexadecanoyl-CoA = 1,2-dihexadecanoyl-sn-glycero-3-phosphocholine + CoA. It catalyses the reaction 1,2-dihexadecanoyl-sn-glycero-3-phosphocholine + H2O = 1-hexadecanoyl-sn-glycero-3-phosphocholine + hexadecanoate + H(+). Functionally, thiol-specific peroxidase that catalyzes the reduction of hydrogen peroxide and organic hydroperoxides to water and alcohols, respectively. Can reduce H(2)O(2) and short chain organic, fatty acid, and phospholipid hydroperoxides. Also has phospholipase activity, and can therefore either reduce the oxidized sn-2 fatty acyl group of phospholipids (peroxidase activity) or hydrolyze the sn-2 ester bond of phospholipids (phospholipase activity). These activities are dependent on binding to phospholipids at acidic pH and to oxidized phospholipds at cytosolic pH. Plays a role in cell protection against oxidative stress by detoxifying peroxides and in phospholipid homeostasis. Exhibits acyl-CoA-dependent lysophospholipid acyltransferase which mediates the conversion of lysophosphatidylcholine (1-acyl-sn-glycero-3-phosphocholine or LPC) into phosphatidylcholine (1,2-diacyl-sn-glycero-3-phosphocholine or PC). Shows a clear preference for LPC as the lysophospholipid and for palmitoyl CoA as the fatty acyl substrate. The sequence is that of Peroxiredoxin-6 (PRDX6) from Bos taurus (Bovine).